The chain runs to 227 residues: Endo-1,4-beta-xylanase 2 (227 aa).

An N-terminal signal peptide occupies residues 1-36 (MVSIKSVLAAATAVSSALAAPFDFVPRDNSTALQAR). Residue Asn-29 is glycosylated (N-linked (GlcNAc...) asparagine). The 189-residue stretch at 37-225 (QVTPNAEGWH…SSGESDIYVQ (189 aa)) folds into the GH11 domain. The active-site Nucleophile is Glu-121. Glu-212 acts as the Proton donor in catalysis.

It belongs to the glycosyl hydrolase 11 (cellulase G) family.

The protein resides in the secreted. The enzyme catalyses Endohydrolysis of (1-&gt;4)-beta-D-xylosidic linkages in xylans.. It functions in the pathway glycan degradation; xylan degradation. Endo-1,4-beta-xylanase involved in the hydrolysis of xylan, a major structural heterogeneous polysaccharide found in plant biomass representing the second most abundant polysaccharide in the biosphere, after cellulose. This Humicola insolens (Soft-rot fungus) protein is Endo-1,4-beta-xylanase 2 (xyn2).